Here is a 356-residue protein sequence, read N- to C-terminus: 45 kDa calcium-binding protein (356 aa).

The first 29 residues, 1-29 (MMSRQAFLCSLGSLYLSLLFVFLLMDVYA), serve as a signal peptide directing secretion. Residue Asn-33 is glycosylated (N-linked (GlcNAc...) asparagine). 5 EF-hand domains span residues 92–127 (KNRK…KTDE), 131–166 (EAVE…SKGL), 227–262 (MLKF…TVEN), 272–307 (WVKD…MNEY), and 308–343 (NALN…FTGS). Ca(2+) contacts are provided by Asp-105, Asp-107, Asp-109, Lys-111, Glu-116, Asp-144, Asp-146, Asp-148, His-150, Glu-155, Asp-240, Asp-242, Asp-244, Lys-246, Glu-251, Asp-285, Asn-287, Asp-289, Glu-296, Asp-321, Asn-323, Asn-325, His-327, and Glu-332.

The protein belongs to the CREC family.

The protein resides in the golgi apparatus lumen. May regulate calcium-dependent activities in the endoplasmic reticulum lumen or post-ER compartment. The chain is 45 kDa calcium-binding protein (SDF4) from Gallus gallus (Chicken).